The following is a 138-amino-acid chain: Small ribosomal subunit protein uS11c (138 aa).

The tract at residues 1–22 (MTKPIPRIGSRRNGRIGSRKNA) is disordered. Residues 9–22 (GSRRNGRIGSRKNA) show a composition bias toward basic residues.

This sequence belongs to the universal ribosomal protein uS11 family. In terms of assembly, part of the 30S ribosomal subunit.

The protein localises to the plastid. It localises to the chloroplast. The chain is Small ribosomal subunit protein uS11c from Dioscorea elephantipes (Elephant's foot yam).